A 64-amino-acid polypeptide reads, in one-letter code: Probable tautomerase lp_1712 (64 aa).

Catalysis depends on Pro2, which acts as the Proton acceptor; via imino nitrogen.

Belongs to the 4-oxalocrotonate tautomerase family.

This is Probable tautomerase lp_1712 from Lactiplantibacillus plantarum (strain ATCC BAA-793 / NCIMB 8826 / WCFS1) (Lactobacillus plantarum).